The chain runs to 193 residues: dTTP/UTP pyrophosphatase (193 aa).

The active-site Proton acceptor is the Asp75.

Belongs to the Maf family. YhdE subfamily. A divalent metal cation serves as cofactor.

It localises to the cytoplasm. It carries out the reaction dTTP + H2O = dTMP + diphosphate + H(+). The enzyme catalyses UTP + H2O = UMP + diphosphate + H(+). Nucleoside triphosphate pyrophosphatase that hydrolyzes dTTP and UTP. May have a dual role in cell division arrest and in preventing the incorporation of modified nucleotides into cellular nucleic acids. This is dTTP/UTP pyrophosphatase from Koribacter versatilis (strain Ellin345).